Reading from the N-terminus, the 474-residue chain is UDP-N-acetylmuramate--L-alanine ligase (474 aa).

116–122 lines the ATP pocket; sequence GTHGKTT.

It belongs to the MurCDEF family.

The protein resides in the cytoplasm. The catalysed reaction is UDP-N-acetyl-alpha-D-muramate + L-alanine + ATP = UDP-N-acetyl-alpha-D-muramoyl-L-alanine + ADP + phosphate + H(+). Its pathway is cell wall biogenesis; peptidoglycan biosynthesis. Cell wall formation. This is UDP-N-acetylmuramate--L-alanine ligase from Hyphomonas neptunium (strain ATCC 15444).